The chain runs to 291 residues: Ribosomal RNA small subunit methyltransferase A (291 aa).

Residues asparagine 27, leucine 29, glycine 54, glutamate 75, aspartate 100, and asparagine 125 each contribute to the S-adenosyl-L-methionine site.

The protein belongs to the class I-like SAM-binding methyltransferase superfamily. rRNA adenine N(6)-methyltransferase family. RsmA subfamily.

It is found in the cytoplasm. It carries out the reaction adenosine(1518)/adenosine(1519) in 16S rRNA + 4 S-adenosyl-L-methionine = N(6)-dimethyladenosine(1518)/N(6)-dimethyladenosine(1519) in 16S rRNA + 4 S-adenosyl-L-homocysteine + 4 H(+). Specifically dimethylates two adjacent adenosines (A1518 and A1519) in the loop of a conserved hairpin near the 3'-end of 16S rRNA in the 30S particle. May play a critical role in biogenesis of 30S subunits. The protein is Ribosomal RNA small subunit methyltransferase A of Streptococcus mutans serotype c (strain ATCC 700610 / UA159).